The following is a 156-amino-acid chain: Lipoprotein signal peptidase (156 aa).

3 helical membrane passes run 5–25 (FKFI…DQWV), 64–84 (YLHL…RTLL), and 89–109 (IAFG…FIHG). Catalysis depends on residues Asp-113 and Asp-130. A helical transmembrane segment spans residues 122 to 142 (NFAIFNVADVMINISVALILI).

It belongs to the peptidase A8 family.

Its subcellular location is the cell inner membrane. It carries out the reaction Release of signal peptides from bacterial membrane prolipoproteins. Hydrolyzes -Xaa-Yaa-Zaa-|-(S,diacylglyceryl)Cys-, in which Xaa is hydrophobic (preferably Leu), and Yaa (Ala or Ser) and Zaa (Gly or Ala) have small, neutral side chains.. The protein operates within protein modification; lipoprotein biosynthesis (signal peptide cleavage). Its function is as follows. This protein specifically catalyzes the removal of signal peptides from prolipoproteins. The chain is Lipoprotein signal peptidase from Campylobacter jejuni subsp. jejuni serotype O:2 (strain ATCC 700819 / NCTC 11168).